The chain runs to 712 residues: Polyphosphate kinase (712 aa).

ATP is bound at residue N49. 2 residues coordinate Mg(2+): R398 and R428. The active-site Phosphohistidine intermediate is the H458. Residues Y491, R587, and H615 each contribute to the ATP site.

It belongs to the polyphosphate kinase 1 (PPK1) family. The cofactor is Mg(2+). In terms of processing, an intermediate of this reaction is the autophosphorylated ppk in which a phosphate is covalently linked to a histidine residue through a N-P bond.

The enzyme catalyses [phosphate](n) + ATP = [phosphate](n+1) + ADP. Catalyzes the reversible transfer of the terminal phosphate of ATP to form a long-chain polyphosphate (polyP). This Prochlorococcus marinus (strain MIT 9313) protein is Polyphosphate kinase.